Here is a 297-residue protein sequence, read N- to C-terminus: Nitrogenase iron protein (297 aa).

Residue 11-18 (GKGGIGKS) participates in ATP binding. [4Fe-4S] cluster is bound at residue cysteine 99. Arginine 102 bears the ADP-ribosylarginine; by dinitrogenase reductase ADP-ribosyltransferase mark. Cysteine 133 is a [4Fe-4S] cluster binding site.

It belongs to the NifH/BchL/ChlL family. In terms of assembly, homodimer. [4Fe-4S] cluster serves as cofactor. In terms of processing, the reversible ADP-ribosylation of Arg-102 inactivates the nitrogenase reductase and regulates nitrogenase activity.

The enzyme catalyses N2 + 8 reduced [2Fe-2S]-[ferredoxin] + 16 ATP + 16 H2O = H2 + 8 oxidized [2Fe-2S]-[ferredoxin] + 2 NH4(+) + 16 ADP + 16 phosphate + 6 H(+). In terms of biological role, the key enzymatic reactions in nitrogen fixation are catalyzed by the nitrogenase complex, which has 2 components: the iron protein and the molybdenum-iron protein. This Mesorhizobium japonicum (strain LMG 29417 / CECT 9101 / MAFF 303099) (Mesorhizobium loti (strain MAFF 303099)) protein is Nitrogenase iron protein.